The chain runs to 131 residues: Small ribosomal subunit protein uS12 (131 aa).

The interval 1–32 (MPTFSQLVRKGRTAPRYKTASPALQGSPQRRG) is disordered. Asp-89 carries the 3-methylthioaspartic acid modification. The segment at 110 to 131 (RKQGRSKYGAKRAKGGAAAGKK) is disordered. Residues 111–131 (KQGRSKYGAKRAKGGAAAGKK) are compositionally biased toward basic residues.

The protein belongs to the universal ribosomal protein uS12 family. In terms of assembly, part of the 30S ribosomal subunit. Contacts proteins S8 and S17. May interact with IF1 in the 30S initiation complex.

Functionally, with S4 and S5 plays an important role in translational accuracy. In terms of biological role, interacts with and stabilizes bases of the 16S rRNA that are involved in tRNA selection in the A site and with the mRNA backbone. Located at the interface of the 30S and 50S subunits, it traverses the body of the 30S subunit contacting proteins on the other side and probably holding the rRNA structure together. The combined cluster of proteins S8, S12 and S17 appears to hold together the shoulder and platform of the 30S subunit. The protein is Small ribosomal subunit protein uS12 of Acidobacterium capsulatum (strain ATCC 51196 / DSM 11244 / BCRC 80197 / JCM 7670 / NBRC 15755 / NCIMB 13165 / 161).